A 149-amino-acid polypeptide reads, in one-letter code: SsrA-binding protein (149 aa).

Belongs to the SmpB family.

The protein resides in the cytoplasm. Functionally, required for rescue of stalled ribosomes mediated by trans-translation. Binds to transfer-messenger RNA (tmRNA), required for stable association of tmRNA with ribosomes. tmRNA and SmpB together mimic tRNA shape, replacing the anticodon stem-loop with SmpB. tmRNA is encoded by the ssrA gene; the 2 termini fold to resemble tRNA(Ala) and it encodes a 'tag peptide', a short internal open reading frame. During trans-translation Ala-aminoacylated tmRNA acts like a tRNA, entering the A-site of stalled ribosomes, displacing the stalled mRNA. The ribosome then switches to translate the ORF on the tmRNA; the nascent peptide is terminated with the 'tag peptide' encoded by the tmRNA and targeted for degradation. The ribosome is freed to recommence translation, which seems to be the essential function of trans-translation. The chain is SsrA-binding protein from Mesoplasma florum (strain ATCC 33453 / NBRC 100688 / NCTC 11704 / L1) (Acholeplasma florum).